The primary structure comprises 419 residues: 26S proteasome regulatory subunit 8 homolog A (419 aa).

Alanine 2 carries the N-acetylalanine modification. ATP is bound at residue 202–209 (GPPGTGKT). Residue lysine 406 forms a Glycyl lysine isopeptide (Lys-Gly) (interchain with G-Cter in ubiquitin) linkage.

It belongs to the AAA ATPase family. Component of the 19S regulatory particle (RP/PA700) base subcomplex of the 26S proteasome. The 26S proteasome is composed of a core protease (CP), known as the 20S proteasome, capped at one or both ends by the 19S regulatory particle (RP/PA700). The RP/PA700 complex is composed of at least 17 different subunits in two subcomplexes, the base and the lid, which form the portions proximal and distal to the 20S proteolytic core, respectively.

The protein resides in the cytoplasm. Its subcellular location is the nucleus. Its function is as follows. The 26S proteasome is involved in the ATP-dependent degradation of ubiquitinated proteins. The regulatory (or ATPase) complex confers ATP dependency and substrate specificity to the 26S complex. This chain is 26S proteasome regulatory subunit 8 homolog A (RPT6A), found in Arabidopsis thaliana (Mouse-ear cress).